Consider the following 471-residue polypeptide: Tryptophanase (471 aa).

N6-acetyllysine occurs at positions 5, 115, and 156. Position 270 is an N6-(pyridoxal phosphate)lysine (K270). An N6-acetyllysine modification is found at K450.

It belongs to the beta-eliminating lyase family. In terms of assembly, homotetramer. Pyridoxal 5'-phosphate serves as cofactor.

The catalysed reaction is L-tryptophan + H2O = indole + pyruvate + NH4(+). The protein operates within amino-acid degradation; L-tryptophan degradation via pyruvate pathway; indole and pyruvate from L-tryptophan: step 1/1. This Escherichia coli O139:H28 (strain E24377A / ETEC) protein is Tryptophanase.